Consider the following 447-residue polypeptide: Trigger factor (447 aa).

One can recognise a PPIase FKBP-type domain in the interval 174–261 (GDIAVLGFKG…LKDLKTRELP (88 aa)).

Belongs to the FKBP-type PPIase family. Tig subfamily.

Its subcellular location is the cytoplasm. The catalysed reaction is [protein]-peptidylproline (omega=180) = [protein]-peptidylproline (omega=0). Involved in protein export. Acts as a chaperone by maintaining the newly synthesized protein in an open conformation. Functions as a peptidyl-prolyl cis-trans isomerase. In Synechococcus sp. (strain CC9902), this protein is Trigger factor.